Here is a 156-residue protein sequence, read N- to C-terminus: Transcription antitermination protein NusB (156 aa).

This sequence belongs to the NusB family.

Involved in transcription antitermination. Required for transcription of ribosomal RNA (rRNA) genes. Binds specifically to the boxA antiterminator sequence of the ribosomal RNA (rrn) operons. This Rickettsia rickettsii (strain Iowa) protein is Transcription antitermination protein NusB.